The sequence spans 321 residues: uncharacterized protein (321 aa).

It belongs to the NAD(P)-dependent epimerase/dehydratase family.

This is an uncharacterized protein from Staphylococcus aureus (strain MRSA252).